The sequence spans 997 residues: Frequency clock protein (997 aa).

Disordered stretches follow at residues methionine 1–serine 153, phenylalanine 214–histidine 311, glycine 381–proline 447, serine 524–proline 590, aspartate 665–alanine 694, glutamate 889–asparagine 908, and serine 975–serine 997. Positions glycine 74–asparagine 94 are enriched in polar residues. Residues lysine 115–arginine 125 are compositionally biased toward basic and acidic residues. Positions aspartate 138–serine 152 are enriched in polar residues. Positions glutamine 227 to alanine 237 are enriched in basic residues. Residues histidine 239–serine 261 show a composition bias toward low complexity. Polar residues predominate over residues alanine 264–alanine 275. Low complexity predominate over residues serine 277 to serine 294. Residues lysine 391–aspartate 402 show a composition bias toward polar residues. Over residues valine 410 to glycine 421 the composition is skewed to gly residues. Residues arginine 438 to proline 447 are compositionally biased toward basic and acidic residues. Positions arginine 569 to lysine 573 match the Nuclear localization signal motif. The span at proline 675–serine 688 shows a compositional bias: polar residues. Over residues glycine 986–serine 997 the composition is skewed to polar residues.

The protein belongs to the FRQ family.

It localises to the nucleus. Its function is as follows. Circadian clock component involved in the generation of biological rhythms, in particular in rhythm stability, period length, and temperature compensation. Behaves as a negative element in circadian transcriptional loop. The chain is Frequency clock protein (FRQ) from Sordaria fimicola.